Consider the following 236-residue polypeptide: Phosphoribosylaminoimidazole-succinocarboxamide synthase (236 aa).

This sequence belongs to the SAICAR synthetase family.

It carries out the reaction 5-amino-1-(5-phospho-D-ribosyl)imidazole-4-carboxylate + L-aspartate + ATP = (2S)-2-[5-amino-1-(5-phospho-beta-D-ribosyl)imidazole-4-carboxamido]succinate + ADP + phosphate + 2 H(+). The protein operates within purine metabolism; IMP biosynthesis via de novo pathway; 5-amino-1-(5-phospho-D-ribosyl)imidazole-4-carboxamide from 5-amino-1-(5-phospho-D-ribosyl)imidazole-4-carboxylate: step 1/2. This Lysinibacillus sphaericus (strain C3-41) protein is Phosphoribosylaminoimidazole-succinocarboxamide synthase.